The following is a 210-amino-acid chain: MPNLLVLVRHGQSEWNKKNLFTGWRDPGLTEQGMEEAREAGQAIKAKGLVFDVAYTSALSRAQETNRIVLEELGQGDIEIIENEALNERDYGDLSGLNKDDAREKWGEEQVHIWRRSYDIPPPGGESLKMTAERVLPYFEKEILPRVLKGERVLIAAHGNSLRSLVMQLDKLSQEQVLALNIATGAPIVYELDDKGGVVRKEMLIEREAH.

Substrate-binding positions include 9 to 16 (RHGQSEWN), 22 to 23 (TG), R61, 88 to 91 (ERDY), K99, 115 to 116 (RR), and 159 to 160 (GN). The active-site Tele-phosphohistidine intermediate is H10. E88 acts as the Proton donor/acceptor in catalysis.

It belongs to the phosphoglycerate mutase family. BPG-dependent PGAM subfamily. As to quaternary structure, homodimer.

It catalyses the reaction (2R)-2-phosphoglycerate = (2R)-3-phosphoglycerate. It functions in the pathway carbohydrate degradation; glycolysis; pyruvate from D-glyceraldehyde 3-phosphate: step 3/5. Catalyzes the interconversion of 2-phosphoglycerate and 3-phosphoglycerate. The sequence is that of 2,3-bisphosphoglycerate-dependent phosphoglycerate mutase from Parvibaculum lavamentivorans (strain DS-1 / DSM 13023 / NCIMB 13966).